Consider the following 187-residue polypeptide: Elongation factor P (187 aa).

This sequence belongs to the elongation factor P family.

It localises to the cytoplasm. It participates in protein biosynthesis; polypeptide chain elongation. Its function is as follows. Involved in peptide bond synthesis. Stimulates efficient translation and peptide-bond synthesis on native or reconstituted 70S ribosomes in vitro. Probably functions indirectly by altering the affinity of the ribosome for aminoacyl-tRNA, thus increasing their reactivity as acceptors for peptidyl transferase. This chain is Elongation factor P (efp), found in Mycobacterium bovis (strain ATCC BAA-935 / AF2122/97).